Consider the following 198-residue polypeptide: Syndecan-4 (198 aa).

An N-terminal signal peptide occupies residues 1-18 (MAPARLFALLLFFVGGVA). Residues 19-145 (ESIRETEVID…QGSNIFERTE (127 aa)) lie on the Extracellular side of the membrane. O-linked (Xyl...) (glycosaminoglycan) serine glycosylation is found at Ser39, Ser61, and Ser63. A glycan (O-linked (Xyl...) (chondroitin sulfate) serine) is linked at Ser95. The chain crosses the membrane as a helical span at residues 146–170 (VLAALIVGGIVGILFAVFLILLLMY). Residues 171-198 (RMKKKDEGSYDLGKKPIYKKAPTNEFYA) lie on the Cytoplasmic side of the membrane.

It belongs to the syndecan proteoglycan family. Homodimer. Interacts (via its cytoplasmic domain) with GIPC (via its PDZ domain). Interacts (via its cytoplasmic domain) with NUDT16L1. Interacts with CDCP1 and SDCBP. Interacts with DNM2; this interaction is markedly enhanced at focal ahesion site upon induction of focal adhesions and stress-fiber formation. In terms of processing, shedding is enhanced by a number of factors such as heparanase, thrombin or EGF. Also by stress and wound healing. PMA-mediated shedding is inhibited by TIMP3. Post-translationally, O-glycosylated; contains both chondroitin sulfate and heparan sulfate. Ser-39, Ser-61 and Ser-63 can all be modified by either chondroitin sulfate or heparan sulfate, and the protein exists in forms that contain only chondroitin sulfate, only heparan sulfate and both chondroitin sulfate and heparan sulfate. Detected in fibroblasts (at protein level). Also expressed in epithelial cells.

It localises to the membrane. It is found in the secreted. Functionally, cell surface proteoglycan which regulates exosome biogenesis in concert with SDCBP and PDCD6IP. The polypeptide is Syndecan-4 (Homo sapiens (Human)).